Consider the following 342-residue polypeptide: Cathepsin B-like cysteine proteinase 2 (342 aa).

The signal sequence occupies residues 1-18 (MKYLVLALCTYLCSQSGA). Positions 19-86 (DENAAQGIPL…VKEDPDPEVD (68 aa)) are cleaved as a propeptide — activation peptide. A glycan (N-linked (GlcNAc...) asparagine) is linked at N99. 6 cysteine pairs are disulfide-bonded: C100-C128, C111-C156, C147-C214, C148-C152, C185-C218, and C193-C205. C114 is a catalytic residue. N138 is a glycosylation site (N-linked (GlcNAc...) asparagine). A glycan (N-linked (GlcNAc...) asparagine) is linked at N198. The active site involves H285. N296 carries N-linked (GlcNAc...) asparagine glycosylation. N305 is a catalytic residue.

It belongs to the peptidase C1 family.

Expression of the protease correlates with blood-feeding and suggests a role for the protease in blood digestion. This Haemonchus contortus (Barber pole worm) protein is Cathepsin B-like cysteine proteinase 2 (AC-2).